Reading from the N-terminus, the 199-residue chain is Lipid A acyltransferase PagP (199 aa).

Positions M1 to A25 are cleaved as a signal peptide. Residues H74, D117, and S118 contribute to the active site.

Belongs to the lipid A palmitoyltransferase family. Homodimer.

Its subcellular location is the cell outer membrane. It carries out the reaction a lipid A + a 1,2-diacyl-sn-glycero-3-phosphocholine = a hepta-acyl lipid A + a 2-acyl-sn-glycero-3-phosphocholine. The catalysed reaction is a lipid IVA + a 1,2-diacyl-sn-glycero-3-phosphocholine = a lipid IVB + a 2-acyl-sn-glycero-3-phosphocholine. The enzyme catalyses a lipid IIA + a 1,2-diacyl-sn-glycero-3-phosphocholine = a lipid IIB + a 2-acyl-sn-glycero-3-phosphocholine. Functionally, transfers a fatty acid residue from the sn-1 position of a phospholipid to the N-linked hydroxyfatty acid chain on the proximal unit of lipid A or its precursors. This chain is Lipid A acyltransferase PagP, found in Yersinia pestis bv. Antiqua (strain Antiqua).